Here is a 508-residue protein sequence, read N- to C-terminus: Phenylalanine--tRNA ligase alpha subunit (508 aa).

Alanine 2 carries the post-translational modification N-acetylalanine. Threonine 190 carries the post-translational modification Phosphothreonine. Serine 193 and serine 301 each carry phosphoserine. Lysine 311 is subject to N6-acetyllysine. Residues threonine 329, 372–374 (QIE), and tyrosine 412 contribute to the L-phenylalanine site. Glutamate 414 contacts Mg(2+). Position 438 (phenylalanine 438) interacts with L-phenylalanine.

Belongs to the class-II aminoacyl-tRNA synthetase family. Phe-tRNA synthetase alpha subunit type 2 subfamily. Heterotetramer; dimer of two heterodimers formed by FARSA and FARSB.

Its subcellular location is the cytoplasm. It carries out the reaction tRNA(Phe) + L-phenylalanine + ATP = L-phenylalanyl-tRNA(Phe) + AMP + diphosphate + H(+). The sequence is that of Phenylalanine--tRNA ligase alpha subunit (FARSA) from Homo sapiens (Human).